The following is a 529-amino-acid chain: GTPase Obg (529 aa).

The 158-residue stretch at 2–159 (ASFVDRVVLH…SDIVLELKSI (158 aa)) folds into the Obg domain. An OBG-type G domain is found at 160 to 343 (ADIALVGFPS…LGFAMAEIVK (184 aa)). Residues 166–173 (GFPSAGKS), 191–195 (FTTLI), 212–215 (DVPG), 295–298 (NKVD), and 324–326 (SAT) each bind GTP. Residues Ser173 and Thr193 each contribute to the Mg(2+) site. The region spanning 363-447 (PRAVNEAGFK…DDGVVFDWEP (85 aa)) is the OCT domain. Over residues 466 to 502 (FADIGDRPTRGQKRDEQQERRDAKAAARAELEAERKA) the composition is skewed to basic and acidic residues. A disordered region spans residues 466–529 (FADIGDRPTR…ESGLTTENEE (64 aa)).

It belongs to the TRAFAC class OBG-HflX-like GTPase superfamily. OBG GTPase family. Monomer. Mg(2+) serves as cofactor.

Its subcellular location is the cytoplasm. An essential GTPase which binds GTP, GDP and possibly (p)ppGpp with moderate affinity, with high nucleotide exchange rates and a fairly low GTP hydrolysis rate. Plays a role in control of the cell cycle, stress response, ribosome biogenesis and in those bacteria that undergo differentiation, in morphogenesis control. In Arthrobacter sp. (strain FB24), this protein is GTPase Obg.